Consider the following 1040-residue polypeptide: Multidrug resistance protein MdtB (1040 aa).

12 helical membrane passes run 16–36 (FIMR…AGII), 347–367 (LMMA…NIPA), 369–389 (IIPG…MVFL), 396–416 (LTLM…IVVI), 440–460 (IGFT…PLLF), 472–492 (FAIT…TLTP), 537–557 (WLTL…WVFI), 863–883 (LGST…VLGI), 888–908 (FIHP…ALLA), 911–931 (IAGS…IGIV), 968–988 (ILMT…STGV), and 998–1018 (IGMV…TPVI).

It belongs to the resistance-nodulation-cell division (RND) (TC 2.A.6) family. MdtB subfamily. As to quaternary structure, part of a tripartite efflux system composed of MdtA, MdtB and MdtC. MdtB forms a heteromultimer with MdtC.

Its subcellular location is the cell inner membrane. In terms of biological role, the MdtABC tripartite complex confers resistance against novobiocin and deoxycholate. This is Multidrug resistance protein MdtB from Escherichia coli O17:K52:H18 (strain UMN026 / ExPEC).